Reading from the N-terminus, the 249-residue chain is Phosphoadenosine 5'-phosphosulfate reductase (249 aa).

Catalysis depends on C230, which acts as the Nucleophile; cysteine thiosulfonate intermediate.

The protein belongs to the PAPS reductase family. CysH subfamily.

It is found in the cytoplasm. The enzyme catalyses [thioredoxin]-disulfide + sulfite + adenosine 3',5'-bisphosphate + 2 H(+) = [thioredoxin]-dithiol + 3'-phosphoadenylyl sulfate. Its pathway is sulfur metabolism; hydrogen sulfide biosynthesis; sulfite from sulfate: step 3/3. Its function is as follows. Catalyzes the formation of sulfite from phosphoadenosine 5'-phosphosulfate (PAPS) using thioredoxin as an electron donor. The protein is Phosphoadenosine 5'-phosphosulfate reductase of Synechocystis sp. (strain ATCC 27184 / PCC 6803 / Kazusa).